The primary structure comprises 246 residues: tRNA (guanine-N(7)-)-methyltransferase (246 aa).

S-adenosyl-L-methionine contacts are provided by E77, E102, D129, and D152. The active site involves D152. Substrate contacts are provided by residues K156, D188, and 225-228; that span reads TKFE.

Belongs to the class I-like SAM-binding methyltransferase superfamily. TrmB family.

It catalyses the reaction guanosine(46) in tRNA + S-adenosyl-L-methionine = N(7)-methylguanosine(46) in tRNA + S-adenosyl-L-homocysteine. It functions in the pathway tRNA modification; N(7)-methylguanine-tRNA biosynthesis. In terms of biological role, catalyzes the formation of N(7)-methylguanine at position 46 (m7G46) in tRNA. The protein is tRNA (guanine-N(7)-)-methyltransferase of Haemophilus influenzae (strain PittGG).